Reading from the N-terminus, the 496-residue chain is Fatty acyl-CoA reductase 8 (496 aa).

This sequence belongs to the fatty acyl-CoA reductase family.

The enzyme catalyses a long-chain fatty acyl-CoA + 2 NADPH + 2 H(+) = a long-chain primary fatty alcohol + 2 NADP(+) + CoA. Functionally, catalyzes the reduction of fatty acyl-CoA to fatty alcohols. Catalyzes specifically the formation of C16:0 fatty alcohol. The polypeptide is Fatty acyl-CoA reductase 8 (FAR8) (Arabidopsis thaliana (Mouse-ear cress)).